The sequence spans 164 residues: Endoribonuclease YbeY (164 aa).

3 residues coordinate Zn(2+): His111, His115, and His121. The segment at 142-164 (GYPDPYADDETETSPTVTTKDSE) is disordered. Polar residues predominate over residues 154 to 164 (TSPTVTTKDSE).

Belongs to the endoribonuclease YbeY family. Requires Zn(2+) as cofactor.

It localises to the cytoplasm. In terms of biological role, single strand-specific metallo-endoribonuclease involved in late-stage 70S ribosome quality control and in maturation of the 3' terminus of the 16S rRNA. The sequence is that of Endoribonuclease YbeY from Pseudomonas fluorescens (strain Pf0-1).